We begin with the raw amino-acid sequence, 1088 residues long: MGKYNLILSEYLSFIYNSQSAVQIPIYYSSNSELESRCIEFHSKCLENSKNGLSLKKLFIEYNDVIENATLLSILSYSYDKYNAVERKLAKYARGKPLEADLTVNELDYENNKITSELFPTAEEYTDSLMDPAILTSLSSNLNAVMFWLEKHENDTAEKLKIYKRRLDLFTIVASTVNKYGVPRHNAKYRYEYDVMKDKPYYLVTWANSSIEMLMSVFSHEDYLIARELIVLSYSNRSTLAKLVSSPMSILVALVDINGTFITNEELELEFSNKYVRAIVPDQTFNELNQMLDNMRKAGLVDIPKMIQDWLTDCSIEKFPLMAKIYSWSFHVGFRKQKMLDAALDQLKTEYTEDVDEEMYREYTMLIRDEVVKMLEEPVKHDDHLLQDSELAGLLSMSSASNGESRQLKFGRKTIFSTKKNMHVMDDMANGRYTPGIIPPVNVDKPIPLGRRDVPGRRTRIIFILPYEYFIAQHAVVEKMLIYAKHTREYAEFYSQSNQLLSYGDVTRFLSNNAMVLYTDVSQWDSSQHNTQPFRKGIIMGLDILANMTNDTRVIQTLNLYKQTQINLMNSYVQIPDGNIIKKIQYGAVASGEKQTKAANSIANLALIKTVLSRISNKYSFVTKIIRVDGDDNYAVLQFNTEVTKQMVQDVSNDVRETYARMNAKVKALVSTVGIEIAKRYIAGGKIFFRAGINLLNNEKRGQNTQWDQAAVLYSNYIVNRLRGFETDREFILTKIMQMTSVAITGSLRLFPSERVLTTNSTFKIFDSEDFIIEYGTTDDEVYIQRAFMSLSSQRSGIADEIAASTTFKNYISKLSEQLLFSKNNIVSKGIALTEKAKLNSYAPISLEKRRAQISALLTMLQKPVTFKSSKITINDILRDIKPFFTLREAHLPIQYQKFMPTLPENVQYIIQCIGSRTYQIEDDGSKSAISRLISKYSVYKPSIEELYKVISLHENEIQLYLISLGIPKIDADTYVGSKIYSQDKYRILESYVYNLLSINYGCYQLFDFNSPDLEKLIRIPFKGKIPAVTFILHLYAKLEIINYAIKNGSWISLFCNYPKSEMIKLWKKMWNITSLRSPYTNANFFQD.

The RdRp catalytic domain maps to 501-687 (LSYGDVTRFL…AKRYIAGGKI (187 aa)).

The protein belongs to the reoviridae RNA-directed RNA polymerase family. As to quaternary structure, interacts with VP3 (Potential). Interacts with VP2; this interaction activates VP1. Interacts with NSP5; this interaction is probably necessary for the formation of functional virus factories. Interacts with NSP2; this interaction is weak. It depends on Mg(2+) as a cofactor.

The protein localises to the virion. It catalyses the reaction RNA(n) + a ribonucleoside 5'-triphosphate = RNA(n+1) + diphosphate. RNA-directed RNA polymerase that is involved in both transcription and genome replication. Together with VP3 capping enzyme, forms an enzyme complex positioned near the channels situated at each of the five-fold vertices of the core. Following infection, the outermost layer of the virus is lost, leaving a double-layered particle (DLP) made up of the core and VP6 shell. VP1 then catalyzes the transcription of fully conservative plus-strand genomic RNAs that are extruded through the DLP's channels into the cytoplasm where they function as mRNAs for translation of viral proteins. One copy of each of the viral (+)RNAs is also recruited during core assembly, together with newly synthesized polymerase complexes and VP2. The polymerase of these novo-formed particles catalyzes the synthesis of complementary minus-strands leading to dsRNA formation. To do so, the polymerase specifically recognizes and binds 4 bases 5'-UGUG-3' in the conserved 3'-sequence of plus-strand RNA templates. VP2 presumably activates the autoinhibited VP1-RNA complex to coordinate packaging and genome replication. Once dsRNA synthesis is complete, the polymerase switches to the transcriptional mode, thus providing secondary transcription. This chain is RNA-directed RNA polymerase, found in Rotavirus A (strain RVA/Human/Philippines/L26/1987/G12P1B[4]) (RV-A).